A 106-amino-acid polypeptide reads, in one-letter code: Putative membrane protein insertion efficiency factor (106 aa).

Belongs to the UPF0161 family.

The protein localises to the cell inner membrane. Could be involved in insertion of integral membrane proteins into the membrane. The polypeptide is Putative membrane protein insertion efficiency factor (Acinetobacter baylyi (strain ATCC 33305 / BD413 / ADP1)).